The following is a 291-amino-acid chain: NAD kinase (291 aa).

The active-site Proton acceptor is Asp-72. Residues 72–73, 146–147, Arg-157, Arg-174, Asp-176, 187–192, and Gln-247 each bind NAD(+); these read DG, ND, and TAYSLS.

This sequence belongs to the NAD kinase family. Requires a divalent metal cation as cofactor.

Its subcellular location is the cytoplasm. It catalyses the reaction NAD(+) + ATP = ADP + NADP(+) + H(+). In terms of biological role, involved in the regulation of the intracellular balance of NAD and NADP, and is a key enzyme in the biosynthesis of NADP. Catalyzes specifically the phosphorylation on 2'-hydroxyl of the adenosine moiety of NAD to yield NADP. This is NAD kinase from Hydrogenovibrio crunogenus (strain DSM 25203 / XCL-2) (Thiomicrospira crunogena).